The primary structure comprises 374 residues: N5-carboxyaminoimidazole ribonucleotide synthase (374 aa).

ATP contacts are provided by residues arginine 108, lysine 148, 153-159, 183-186, glutamate 191, histidine 214, and 266-267; these read GYDGKGQ, EKYL, and NE. An ATP-grasp domain is found at 112-296; it reads KETLKSAGTK…QFDTHILAVT (185 aa).

Belongs to the PurK/PurT family. Homodimer.

It carries out the reaction 5-amino-1-(5-phospho-beta-D-ribosyl)imidazole + hydrogencarbonate + ATP = 5-carboxyamino-1-(5-phospho-D-ribosyl)imidazole + ADP + phosphate + 2 H(+). Its pathway is purine metabolism; IMP biosynthesis via de novo pathway; 5-amino-1-(5-phospho-D-ribosyl)imidazole-4-carboxylate from 5-amino-1-(5-phospho-D-ribosyl)imidazole (N5-CAIR route): step 1/2. Its function is as follows. Catalyzes the ATP-dependent conversion of 5-aminoimidazole ribonucleotide (AIR) and HCO(3)(-) to N5-carboxyaminoimidazole ribonucleotide (N5-CAIR). This chain is N5-carboxyaminoimidazole ribonucleotide synthase, found in Staphylococcus aureus (strain Mu50 / ATCC 700699).